Reading from the N-terminus, the 239-residue chain is Large ribosomal subunit protein uL30 (239 aa).

A disordered region spans residues 1 to 37; that stretch reads MSKFVPENVQKKLARDEKLRKAKAEQRKASSAQMKQR. The span at 9–28 shows a compositional bias: basic and acidic residues; the sequence is VQKKLARDEKLRKAKAEQRK.

Belongs to the universal ribosomal protein uL30 family.

This is Large ribosomal subunit protein uL30 (RPL7) from Tetrahymena thermophila.